Reading from the N-terminus, the 300-residue chain is Light-independent protochlorophyllide reductase iron-sulfur ATP-binding protein (300 aa).

ATP-binding positions include 10-15 (GIGKST) and Lys39. Residue Ser14 participates in Mg(2+) binding. [4Fe-4S] cluster is bound by residues Cys95 and Cys129. 180–181 (NR) lines the ATP pocket.

The protein belongs to the NifH/BchL/ChlL family. Homodimer. Protochlorophyllide reductase is composed of three subunits; ChlL, ChlN and ChlB. Requires [4Fe-4S] cluster as cofactor.

The protein resides in the plastid. The protein localises to the chloroplast. The catalysed reaction is chlorophyllide a + oxidized 2[4Fe-4S]-[ferredoxin] + 2 ADP + 2 phosphate = protochlorophyllide a + reduced 2[4Fe-4S]-[ferredoxin] + 2 ATP + 2 H2O. The protein operates within porphyrin-containing compound metabolism; chlorophyll biosynthesis (light-independent). Functionally, component of the dark-operative protochlorophyllide reductase (DPOR) that uses Mg-ATP and reduced ferredoxin to reduce ring D of protochlorophyllide (Pchlide) to form chlorophyllide a (Chlide). This reaction is light-independent. The L component serves as a unique electron donor to the NB-component of the complex, and binds Mg-ATP. This Auxenochlorella protothecoides (Green microalga) protein is Light-independent protochlorophyllide reductase iron-sulfur ATP-binding protein.